A 364-amino-acid polypeptide reads, in one-letter code: MYIKNVHLINFRNYDDMYLELSPNTNIFVGNNAQGKTNILESIYYSSIGKSHRTNKDKDLIKWDKNNTYLRTYVSRERLDKTIDINIFKNGKKAITVNKIKIKKISELMGNLNVVMFSPEDLRIIKDSPGNRRKFLDIELCKINNVYYHDLVQYNKILSERNTALKNWNNKINDIIDIYDEQLSKYGAFIIKERNKYLDKLNIIGKNIHKKITNDLEDINFRYLTNIKDFDNAEKELLMFFKKNRKKDFERNSTSIGPHRDDFEVSINNIDTRIFGSQGQQRTAVLTLKFASLEIIKNIIGEYPVLLLDDVLSELDSNRQKFVLNSIDKIQTIITCTGIEEIDKYLDKKQSQLYLVNNGKIKRV.

30–37 (GNNAQGKT) lines the ATP pocket.

The protein belongs to the RecF family.

It is found in the cytoplasm. The RecF protein is involved in DNA metabolism; it is required for DNA replication and normal SOS inducibility. RecF binds preferentially to single-stranded, linear DNA. It also seems to bind ATP. This is DNA replication and repair protein RecF from Clostridium botulinum (strain 657 / Type Ba4).